A 576-amino-acid chain; its full sequence is Proteinaceous RNase P 3 (576 aa).

Residues 65 to 75 (NRRSRHDDESP) are compositionally biased toward basic and acidic residues. The disordered stretch occupies residues 65–88 (NRRSRHDDESPKNPNKKKKGNRNP). PPR repeat units lie at residues 88–123 (PEKS…DIRL), 129–166 (QSLL…GISP), 167–201 (NESS…GGVS), and 204–238 (RLRT…GIVL). The 236-residue stretch at 335–570 (SSAGKCLSCD…KEESLRSWMC (236 aa)) folds into the PRORP domain. Residues C340 and C343 each contribute to the Zn(2+) site. The Mn(2+) site is built by D402, D480, D481, and D499. The Zn(2+) site is built by H553 and C570.

Belongs to the PPR family. P subfamily. Requires Mg(2+) as cofactor. It depends on Mn(2+) as a cofactor.

It localises to the nucleus. It catalyses the reaction Endonucleolytic cleavage of RNA, removing 5'-extranucleotides from tRNA precursor.. Functionally, endonuclease RNase P responsible for the 5' maturation of tRNA precursors. Also involved in the maturation of mRNA and small nucleolar RNA (snoRNA). The polypeptide is Proteinaceous RNase P 3 (PRORP3) (Arabidopsis thaliana (Mouse-ear cress)).